A 708-amino-acid chain; its full sequence is Quinohemoprotein alcohol dehydrogenase (708 aa).

A signal peptide spans 1 to 31 (MERLIDNSHGWPGRMVWLLAACLGSAAAFAQ). A pyrroloquinoline quinone-binding site is contributed by glutamate 101. Cysteine 147 and cysteine 148 form a disulfide bridge. Residues arginine 153, threonine 198, and 214–215 (GA) contribute to the pyrroloquinoline quinone site. Residue glutamate 216 participates in Ca(2+) binding. Residue threonine 274 participates in pyrroloquinoline quinone binding. Positions 294 and 339 each coordinate Ca(2+). Residue aspartate 339 is the Proton acceptor of the active site. Pyrroloquinoline quinone is bound by residues lysine 366, 425–426 (NW), and valine 575. The region spanning 619-708 (YDPAKVEAGT…GTADAIRPKP (90 aa)) is the Cytochrome c domain. Heme c-binding residues include cysteine 635, cysteine 638, histidine 639, and methionine 678.

It belongs to the bacterial PQQ dehydrogenase family. In terms of assembly, monomer. The cofactor is pyrroloquinoline quinone. Ca(2+) is required as a cofactor. Heme c serves as cofactor. In terms of processing, in the crystallographic structures Trp-543 is oxidized to 2'-hydroxytryptophan.

The protein localises to the periplasm. It carries out the reaction 2 oxidized [azurin] + a primary alcohol = 2 reduced [azurin] + an aldehyde + 2 H(+). Its function is as follows. Catalyzes the dye-linked oxidation of primary alcohols to the corresponding aldehydes and the (subsequent) oxidation of the aldehydes to carboxylic acids. Methanol is not a substrate. The polypeptide is Quinohemoprotein alcohol dehydrogenase (Comamonas testosteroni (Pseudomonas testosteroni)).